The primary structure comprises 387 residues: Sorting nexin-7 (387 aa).

One can recognise a PX domain in the interval 30-151 (KDLFITVDAP…VFLTAQAEEL (122 aa)). Residues Arg-73, Gln-75, Lys-103, and Arg-117 each coordinate a 1,2-diacyl-sn-glycero-3-phospho-(1D-myo-inositol-3-phosphate). Residues 178–387 (GVKNRPEEFM…PSEEDSEEKL (210 aa)) enclose the BAR domain.

This sequence belongs to the sorting nexin family. In terms of assembly, heterodimer; heterodimerizes with SNX4.

It is found in the early endosome membrane. In terms of biological role, involved in the regulation of endocytosis and in several stages of intracellular trafficking. Together with SNX4, involved in autophagosome assembly by regulating trafficking and recycling of phospholipid scramblase ATG9A. The polypeptide is Sorting nexin-7 (Mus musculus (Mouse)).